The primary structure comprises 149 residues: HTH-type transcriptional regulator LrpB (149 aa).

The HTH asnC-type domain maps to 3 to 64 (IDSIDFQILQ…VVDELKMGFS (62 aa)). Positions 22-41 (WKEIGEKIHMTGQAVGNRIK) form a DNA-binding region, H-T-H motif.

Functionally, negative regulation of glyA transcription and kinB-dependent sporulation. The chain is HTH-type transcriptional regulator LrpB (lrpB) from Bacillus subtilis (strain 168).